The following is a 146-amino-acid chain: Endoribonuclease YbeY (146 aa).

Positions 108, 112, and 118 each coordinate Zn(2+).

Belongs to the endoribonuclease YbeY family. Requires Zn(2+) as cofactor.

It localises to the cytoplasm. Functionally, single strand-specific metallo-endoribonuclease involved in late-stage 70S ribosome quality control and in maturation of the 3' terminus of the 16S rRNA. This chain is Endoribonuclease YbeY, found in Aster yellows witches'-broom phytoplasma (strain AYWB).